The sequence spans 290 residues: Acetylglutamate kinase (290 aa).

Substrate is bound by residues 65-66 (GG), arginine 87, and asparagine 186.

It belongs to the acetylglutamate kinase family. ArgB subfamily.

Its subcellular location is the cytoplasm. It catalyses the reaction N-acetyl-L-glutamate + ATP = N-acetyl-L-glutamyl 5-phosphate + ADP. It participates in amino-acid biosynthesis; L-arginine biosynthesis; N(2)-acetyl-L-ornithine from L-glutamate: step 2/4. Catalyzes the ATP-dependent phosphorylation of N-acetyl-L-glutamate. This Mycolicibacterium gilvum (strain PYR-GCK) (Mycobacterium gilvum (strain PYR-GCK)) protein is Acetylglutamate kinase.